Consider the following 250-residue polypeptide: Histone H1.2 (250 aa).

Over residues 1-11 (MSDSAVATSAS) the composition is skewed to polar residues. Disordered regions lie at residues 1–53 (MSDS…QMVD) and 101–250 (KLIQ…ATKK). The segment covering 27-42 (KKAAATPKSKKSTAAP) has biased composition (low complexity). One can recognise an H15 domain in the interval 44-118 (SHPPTQQMVD…GASGSFKLSR (75 aa)). Basic and acidic residues predominate over residues 120–133 (AKKDPKPKASAVEK). The span at 151–161 (STSTTKKAAGA) shows a compositional bias: low complexity. Positions 174–191 (KSVEKKRADKAKAKDAKK) are enriched in basic and acidic residues. The span at 192–211 (TGTIKAKPTTAKAKSSATKP) shows a compositional bias: low complexity. Composition is skewed to basic residues over residues 212–225 (KTPKPKTKSAKPKK) and 235–250 (TAVKKPKAKTASATKK).

The protein belongs to the histone H1/H5 family.

Its subcellular location is the nucleus. It is found in the chromosome. Functionally, histones H1 are necessary for the condensation of nucleosome chains into higher-order structures. The sequence is that of Histone H1.2 (His1.2) from Drosophila virilis (Fruit fly).